Reading from the N-terminus, the 495-residue chain is Probable aspartic-type endopeptidase OPSB (495 aa).

An N-terminal signal peptide occupies residues 1-19; the sequence is MRGDSFIWSLATAIPLLST. The 336-residue stretch at 73-408 folds into the Peptidase A1 domain; it reads YFCNLTLGTP…DLDNNEISIA (336 aa). Asparagine 76 carries an N-linked (GlcNAc...) asparagine glycan. Aspartate 91 is a catalytic residue. Asparagine 136 carries an N-linked (GlcNAc...) asparagine glycan. The active site involves aspartate 290. An N-linked (GlcNAc...) asparagine glycan is attached at asparagine 413. The disordered stretch occupies residues 448-470; that stretch reads TGLPGVETGVPGSRPPSSKAAGQ. The GPI-anchor amidated alanine moiety is linked to residue alanine 467. A propeptide spans 468-495 (removed in mature form); the sequence is AGQAKRPDFVLGVAAVGLAGAGMLFAAM.

It belongs to the peptidase A1 family.

Its subcellular location is the cell membrane. Functionally, probable GPI-anchored aspartic-type endopeptidase which contributes to virulence. The sequence is that of Probable aspartic-type endopeptidase OPSB (OPSB) from Trichophyton verrucosum (strain HKI 0517).